A 61-amino-acid polypeptide reads, in one-letter code: Metallothionein-1B (61 aa).

Residues 1–29 (MDPNCSCTTGGSCACAGSCKCKECKCTSC) form a beta region. Residues Cys5, Cys7, Cys13, Cys15, Cys19, Cys21, Cys24, Cys26, Cys29, Cys33, Cys34, Cys36, Cys37, Cys41, Cys44, Cys48, Cys50, Cys57, Cys59, and Cys60 each coordinate a divalent metal cation. The alpha stretch occupies residues 30–61 (KKCCCSCCPVGCAKCAQGCVCKGSSEKCRCCA).

The protein belongs to the metallothionein superfamily. Type 1 family. Monomer.

Its function is as follows. Metallothioneins have a high content of cysteine residues that bind various heavy metals; these proteins are transcriptionally regulated by both heavy metals and glucocorticoids. This chain is Metallothionein-1B (MT1B), found in Homo sapiens (Human).